We begin with the raw amino-acid sequence, 238 residues long: MKYQPALQSATLLKRYKRFLADLQLSDGSEFTAHCANTGKMTGCAEPGFNAFYSTSTNSKRKYPQSLELTQNSLSQLICVNTAVANKVVAEAINANLISELSNYEQLQSEVKYGNENSRIDFLLTSDERPNCYVEVKSVTLLSQDNPHSGQGYFPDAPTLRGQKHIRELIEMVEQGHRAVLLFAVLHQGINQVSAAAHIDNKYAQLLNEAINQGVEVLAYKADISTNEIILKEKLPFI.

The protein belongs to the SfsA family.

This Pseudoalteromonas translucida (strain TAC 125) protein is Sugar fermentation stimulation protein homolog.